Consider the following 397-residue polypeptide: Torsin-3A (397 aa).

The first 25 residues, 1 to 25, serve as a signal peptide directing secretion; it reads MLRGPWRQLWLFFLLLLPGAPEPRG. N-linked (GlcNAc...) asparagine glycosylation occurs at asparagine 122. 167 to 174 is a binding site for ATP; that stretch reads GWSGTGKN.

The protein belongs to the ClpA/ClpB family. Torsin subfamily. In terms of assembly, may not form homohexamers. Post-translationally, N-glycosylated. In terms of tissue distribution, ubiquitously expressed. Highest expression in stomach, salivary glands and lymph nodes. Isoform 2 is expressed in placenta.

It is found in the cytoplasm. It localises to the endoplasmic reticulum lumen. The polypeptide is Torsin-3A (TOR3A) (Homo sapiens (Human)).